We begin with the raw amino-acid sequence, 86 residues long: Large ribosomal subunit protein bL27c (86 aa).

Residues 1–27 (MAHKKGSGSTRNGRDSNSKRLGVKKYG) are disordered.

Belongs to the bacterial ribosomal protein bL27 family.

The protein resides in the plastid. It is found in the chloroplast. This chain is Large ribosomal subunit protein bL27c, found in Pyropia yezoensis (Susabi-nori).